The primary structure comprises 454 residues: Bifunctional protein GlmU (454 aa).

The segment at 1–226 (MALNVVILAA…AIEVEGANNR (226 aa)) is pyrophosphorylase. Residues 8-11 (LAAG), K22, Q73, 78-79 (GT), 100-102 (YGD), G137, E151, N166, and N224 each bind UDP-N-acetyl-alpha-D-glucosamine. D102 lines the Mg(2+) pocket. Residue N224 coordinates Mg(2+). The segment at 227–247 (VQLAQLERAYQARAAEKLMLE) is linker. Residues 248–454 (GANLRDPARI…GWPRPVKLKK (207 aa)) are N-acetyltransferase. UDP-N-acetyl-alpha-D-glucosamine is bound by residues R330 and K348. Residue H360 is the Proton acceptor of the active site. Residues Y363 and N374 each contribute to the UDP-N-acetyl-alpha-D-glucosamine site. Acetyl-CoA-binding positions include A377, 383-384 (NY), S402, A420, and R437.

The protein in the N-terminal section; belongs to the N-acetylglucosamine-1-phosphate uridyltransferase family. This sequence in the C-terminal section; belongs to the transferase hexapeptide repeat family. In terms of assembly, homotrimer. Requires Mg(2+) as cofactor.

It is found in the cytoplasm. It carries out the reaction alpha-D-glucosamine 1-phosphate + acetyl-CoA = N-acetyl-alpha-D-glucosamine 1-phosphate + CoA + H(+). It catalyses the reaction N-acetyl-alpha-D-glucosamine 1-phosphate + UTP + H(+) = UDP-N-acetyl-alpha-D-glucosamine + diphosphate. The protein operates within nucleotide-sugar biosynthesis; UDP-N-acetyl-alpha-D-glucosamine biosynthesis; N-acetyl-alpha-D-glucosamine 1-phosphate from alpha-D-glucosamine 6-phosphate (route II): step 2/2. It participates in nucleotide-sugar biosynthesis; UDP-N-acetyl-alpha-D-glucosamine biosynthesis; UDP-N-acetyl-alpha-D-glucosamine from N-acetyl-alpha-D-glucosamine 1-phosphate: step 1/1. It functions in the pathway bacterial outer membrane biogenesis; LPS lipid A biosynthesis. Its function is as follows. Catalyzes the last two sequential reactions in the de novo biosynthetic pathway for UDP-N-acetylglucosamine (UDP-GlcNAc). The C-terminal domain catalyzes the transfer of acetyl group from acetyl coenzyme A to glucosamine-1-phosphate (GlcN-1-P) to produce N-acetylglucosamine-1-phosphate (GlcNAc-1-P), which is converted into UDP-GlcNAc by the transfer of uridine 5-monophosphate (from uridine 5-triphosphate), a reaction catalyzed by the N-terminal domain. In Shewanella woodyi (strain ATCC 51908 / MS32), this protein is Bifunctional protein GlmU.